Reading from the N-terminus, the 153-residue chain is Small ribosomal subunit protein eS19 (153 aa).

Disordered regions lie at residues 77 to 99 and 113 to 139; these read YGTS…KGSG and GYVE…TAGD. A compositionally biased stretch (basic and acidic residues) spans 120 to 133; it reads NDGRRVTGDGRSLL.

It belongs to the eukaryotic ribosomal protein eS19 family. Part of the 30S ribosomal subunit.

May be involved in maturation of the 30S ribosomal subunit. This is Small ribosomal subunit protein eS19 from Haloarcula marismortui (strain ATCC 43049 / DSM 3752 / JCM 8966 / VKM B-1809) (Halobacterium marismortui).